Consider the following 193-residue polypeptide: ATP-dependent protease subunit HslV (193 aa).

The active site involves Thr12. Positions 167, 170, and 173 each coordinate Na(+).

Belongs to the peptidase T1B family. HslV subfamily. A double ring-shaped homohexamer of HslV is capped on each side by a ring-shaped HslU homohexamer. The assembly of the HslU/HslV complex is dependent on binding of ATP.

The protein localises to the cytoplasm. The enzyme catalyses ATP-dependent cleavage of peptide bonds with broad specificity.. With respect to regulation, allosterically activated by HslU binding. Its function is as follows. Protease subunit of a proteasome-like degradation complex believed to be a general protein degrading machinery. The sequence is that of ATP-dependent protease subunit HslV from Bartonella quintana (strain Toulouse) (Rochalimaea quintana).